Here is a 365-residue protein sequence, read N- to C-terminus: Chorismate synthase (365 aa).

R46 is an NADP(+) binding site. Residues 124–126 (RAS), G284, 299–303 (KPTPS), and R326 contribute to the FMN site.

This sequence belongs to the chorismate synthase family. It depends on FMNH2 as a cofactor.

It carries out the reaction 5-O-(1-carboxyvinyl)-3-phosphoshikimate = chorismate + phosphate. It participates in metabolic intermediate biosynthesis; chorismate biosynthesis; chorismate from D-erythrose 4-phosphate and phosphoenolpyruvate: step 7/7. Catalyzes the anti-1,4-elimination of the C-3 phosphate and the C-6 proR hydrogen from 5-enolpyruvylshikimate-3-phosphate (EPSP) to yield chorismate, which is the branch point compound that serves as the starting substrate for the three terminal pathways of aromatic amino acid biosynthesis. This reaction introduces a second double bond into the aromatic ring system. The polypeptide is Chorismate synthase (Pyrobaculum neutrophilum (strain DSM 2338 / JCM 9278 / NBRC 100436 / V24Sta) (Thermoproteus neutrophilus)).